Here is a 128-residue protein sequence, read N- to C-terminus: Lysozyme C-1 (128 aa).

A C-type lysozyme domain is found at 1–128; that stretch reads KVYDRCEFAR…VSQYIRGCKL (128 aa). 4 disulfides stabilise this stretch: cysteine 6-cysteine 126, cysteine 30-cysteine 114, cysteine 63-cysteine 79, and cysteine 75-cysteine 93. Active-site residues include glutamate 35 and aspartate 51.

This sequence belongs to the glycosyl hydrolase 22 family. In terms of assembly, monomer.

The protein localises to the secreted. The enzyme catalyses Hydrolysis of (1-&gt;4)-beta-linkages between N-acetylmuramic acid and N-acetyl-D-glucosamine residues in a peptidoglycan and between N-acetyl-D-glucosamine residues in chitodextrins.. In terms of biological role, lysozymes have primarily a bacteriolytic function; those in tissues and body fluids are associated with the monocyte-macrophage system and enhance the activity of immunoagents. This Sus scrofa (Pig) protein is Lysozyme C-1.